Consider the following 771-residue polypeptide: Phosphoglycerate kinase (771 aa).

Residues 1–406 (MKKLITDLNL…PGIDAIQNYE (406 aa)) form a phosphoglycerate kinase region. Residues 20–22 (DLN), R35, 58–61 (HLGR), R118, and R155 each bind substrate. Residues K206, G295, E334, and 361 to 364 (GGDS) contribute to the ATP site. Residues 407–771 (QTYEQYDSQV…KRFWFFGRKR (365 aa)) form a unknown region.

This sequence in the N-terminal section; belongs to the phosphoglycerate kinase family. In terms of assembly, monomer.

The protein resides in the cytoplasm. The catalysed reaction is (2R)-3-phosphoglycerate + ATP = (2R)-3-phospho-glyceroyl phosphate + ADP. It participates in carbohydrate degradation; glycolysis; pyruvate from D-glyceraldehyde 3-phosphate: step 2/5. The chain is Phosphoglycerate kinase (pgk) from Mycoplasmopsis pulmonis (strain UAB CTIP) (Mycoplasma pulmonis).